A 33-amino-acid polypeptide reads, in one-letter code: uncharacterized protein (33 aa).

This is an uncharacterized protein from Saccharomyces cerevisiae (strain ATCC 204508 / S288c) (Baker's yeast).